We begin with the raw amino-acid sequence, 59 residues long: Large ribosomal subunit protein uL30 (59 aa).

This sequence belongs to the universal ribosomal protein uL30 family. In terms of assembly, part of the 50S ribosomal subunit.

The polypeptide is Large ribosomal subunit protein uL30 (Citrifermentans bemidjiense (strain ATCC BAA-1014 / DSM 16622 / JCM 12645 / Bem) (Geobacter bemidjiensis)).